The sequence spans 94 residues: Small ribosomal subunit protein uS19 (94 aa).

Belongs to the universal ribosomal protein uS19 family.

Its function is as follows. Protein S19 forms a complex with S13 that binds strongly to the 16S ribosomal RNA. This Desulforudis audaxviator (strain MP104C) protein is Small ribosomal subunit protein uS19.